Consider the following 98-residue polypeptide: NADH-ubiquinone oxidoreductase chain 4L (98 aa).

Helical transmembrane passes span Met-1–Met-21, Ser-29–Leu-49, and Ile-61–Val-81.

This sequence belongs to the complex I subunit 4L family. In terms of assembly, core subunit of respiratory chain NADH dehydrogenase (Complex I) which is composed of 45 different subunits.

Its subcellular location is the mitochondrion inner membrane. The catalysed reaction is a ubiquinone + NADH + 5 H(+)(in) = a ubiquinol + NAD(+) + 4 H(+)(out). Its function is as follows. Core subunit of the mitochondrial membrane respiratory chain NADH dehydrogenase (Complex I) which catalyzes electron transfer from NADH through the respiratory chain, using ubiquinone as an electron acceptor. Part of the enzyme membrane arm which is embedded in the lipid bilayer and involved in proton translocation. In Ovis aries (Sheep), this protein is NADH-ubiquinone oxidoreductase chain 4L (MT-ND4L).